A 431-amino-acid polypeptide reads, in one-letter code: Enolase (431 aa).

Gln167 contributes to the (2R)-2-phosphoglycerate binding site. Glu209 acts as the Proton donor in catalysis. The Mg(2+) site is built by Asp246, Glu289, and Asp316. Positions 341, 370, 371, and 392 each coordinate (2R)-2-phosphoglycerate. Lys341 serves as the catalytic Proton acceptor.

This sequence belongs to the enolase family. As to quaternary structure, component of the RNA degradosome, a multiprotein complex involved in RNA processing and mRNA degradation. The cofactor is Mg(2+).

The protein localises to the cytoplasm. It localises to the secreted. The protein resides in the cell surface. It carries out the reaction (2R)-2-phosphoglycerate = phosphoenolpyruvate + H2O. It functions in the pathway carbohydrate degradation; glycolysis; pyruvate from D-glyceraldehyde 3-phosphate: step 4/5. Catalyzes the reversible conversion of 2-phosphoglycerate (2-PG) into phosphoenolpyruvate (PEP). It is essential for the degradation of carbohydrates via glycolysis. The polypeptide is Enolase (Shewanella woodyi (strain ATCC 51908 / MS32)).